We begin with the raw amino-acid sequence, 1088 residues long: DNA ligase 4 (1088 aa).

2 disordered regions span residues 1–56 (MALS…KFND) and 73–117 (TTTT…TTTT). Low complexity-rich tracts occupy residues 25–53 (DFKNQQQINTSKTTNNNNNINNKNNYNNK) and 73–90 (TTTTTTKNTSTNSNINKT). The segment covering 95-105 (DDIFDDEDEDS) has biased composition (acidic residues). Positions 414, 416, 421, 467, 514, 574, 579, 596, and 598 each coordinate ATP. The active-site N6-AMP-lysine intermediate is lysine 416. Glutamate 467 provides a ligand contact to Mg(2+). A Mg(2+)-binding site is contributed by glutamate 574. BRCT domains follow at residues 827–917 (PTQN…PKYM) and 984–1088 (CWWS…EILD).

The protein belongs to the ATP-dependent DNA ligase family. Mg(2+) serves as cofactor.

It localises to the nucleus. The catalysed reaction is ATP + (deoxyribonucleotide)n-3'-hydroxyl + 5'-phospho-(deoxyribonucleotide)m = (deoxyribonucleotide)n+m + AMP + diphosphate.. Functionally, DNA ligase involved in DNA non-homologous end joining (NHEJ); required for double-strand break (DSB) repair. In Dictyostelium discoideum (Social amoeba), this protein is DNA ligase 4 (lig4).